Reading from the N-terminus, the 511-residue chain is Serine/threonine-protein kinase Nek3 (511 aa).

Methionine 1 bears the N-acetylmethionine mark. Residues 1-282 (MDNYTVLRVI…EQILDEIKIS (282 aa)) form an interaction with VAV2 region. Positions 4–255 (YTVLRVIGQG…ATTLLCRGSL (252 aa)) constitute a Protein kinase domain. ATP contacts are provided by residues 10-18 (IGQGSFGRA) and lysine 33. The Proton acceptor role is filled by aspartate 125. Threonine 159 is subject to Phosphothreonine; by autocatalysis. Disordered regions lie at residues 299–370 (LGEA…GPSS) and 443–511 (GPLS…GERA). The span at 309-321 (EEERGRKCSHTEL) shows a compositional bias: basic and acidic residues. The span at 472–485 (LDEEDTDFEEDNEN) shows a compositional bias: acidic residues. Threonine 477 carries the phosphothreonine modification. Residues 498–511 (YGDGPGGQLLGERA) are compositionally biased toward gly residues.

Belongs to the protein kinase superfamily. NEK Ser/Thr protein kinase family. NIMA subfamily. As to quaternary structure, interacts with PXN, PRLR, VAV1 and VAV2 and this interaction is prolactin-dependent. It depends on Mg(2+) as a cofactor. In terms of processing, phosphorylation at Thr-477 regulates its catalytic activity. As to expression, brain.

It localises to the cytoplasm. The protein resides in the cell projection. The protein localises to the axon. It carries out the reaction L-seryl-[protein] + ATP = O-phospho-L-seryl-[protein] + ADP + H(+). The catalysed reaction is L-threonyl-[protein] + ATP = O-phospho-L-threonyl-[protein] + ADP + H(+). Functionally, protein kinase which influences neuronal morphogenesis and polarity through effects on microtubules. Regulates microtubule acetylation in neurons. Contributes to prolactin-mediated phosphorylation of PXN and VAV2. The chain is Serine/threonine-protein kinase Nek3 (Nek3) from Mus musculus (Mouse).